A 264-amino-acid polypeptide reads, in one-letter code: Thymidylate synthase (264 aa).

DUMP is bound at residue Arg21. Residue His51 participates in (6R)-5,10-methylene-5,6,7,8-tetrahydrofolate binding. DUMP is bound at residue 126 to 127 (RR). The active-site Nucleophile is Cys146. DUMP contacts are provided by residues 166-169 (RSAD), Asn177, and 207-209 (HIY). Asp169 is a binding site for (6R)-5,10-methylene-5,6,7,8-tetrahydrofolate. Ser263 serves as a coordination point for (6R)-5,10-methylene-5,6,7,8-tetrahydrofolate.

It belongs to the thymidylate synthase family. Bacterial-type ThyA subfamily. Homodimer.

It localises to the cytoplasm. The enzyme catalyses dUMP + (6R)-5,10-methylene-5,6,7,8-tetrahydrofolate = 7,8-dihydrofolate + dTMP. The protein operates within pyrimidine metabolism; dTTP biosynthesis. In terms of biological role, catalyzes the reductive methylation of 2'-deoxyuridine-5'-monophosphate (dUMP) to 2'-deoxythymidine-5'-monophosphate (dTMP) while utilizing 5,10-methylenetetrahydrofolate (mTHF) as the methyl donor and reductant in the reaction, yielding dihydrofolate (DHF) as a by-product. This enzymatic reaction provides an intracellular de novo source of dTMP, an essential precursor for DNA biosynthesis. This chain is Thymidylate synthase, found in Bacillus velezensis (strain DSM 23117 / BGSC 10A6 / LMG 26770 / FZB42) (Bacillus amyloliquefaciens subsp. plantarum).